Consider the following 403-residue polypeptide: Keratin, type I cytoskeletal 19 (403 aa).

Residues Met-1–Asn-82 form a head region. The residue at position 7 (Arg-7) is an Omega-N-methylarginine. Ser-14 is subject to Phosphoserine. At Arg-24 the chain carries Asymmetric dimethylarginine; alternate. Arg-24 is subject to Omega-N-methylarginine; alternate. At Ser-27 the chain carries Phosphoserine. At Arg-32 the chain carries Omega-N-methylarginine. Residues Ser-35 and Ser-40 each carry the phosphoserine modification. An omega-N-methylarginine mark is found at Arg-43 and Arg-51. Residues Ser-57 and Ser-67 each carry the phosphoserine modification. A coil 1A region spans residues Glu-83 to Trp-118. Residues Glu-83–Tyr-394 enclose the IF rod domain. The interval Tyr-119–Thr-136 is linker 1. Residues Ile-137–Leu-228 form a coil 1B region. The segment at Arg-229 to Ile-251 is linker 12. The necessary for interaction with PNN stretch occupies residues Asp-247 to His-393. A coil 2 region spans residues Leu-252–Gln-390. Thr-326 carries the post-translational modification Phosphothreonine. A rod-like helical tail region spans residues Glu-391 to Leu-403. Residue Tyr-394 is modified to Phosphotyrosine. Ser-398 carries the post-translational modification Phosphoserine.

This sequence belongs to the intermediate filament family. In terms of assembly, heterotetramer of two type I and two type II keratins. Interacts with PNN. Interacts with the actin-binding domain of DMD. Expressed in brain, heart, skin and in costameres of myoplasm at the sarcolemmal membrane in skeletal and cardiac muscle fibers. Undifferentiated gonads and somatic cells of ovarian cords throughout the fetal ovary development.

Functionally, involved in the organization of myofibers. Together with KRT8, helps to link the contractile apparatus to dystrophin at the costameres of striated muscle. The polypeptide is Keratin, type I cytoskeletal 19 (Krt19) (Rattus norvegicus (Rat)).